Consider the following 783-residue polypeptide: RNA exonuclease 5 (783 aa).

The 149-residue stretch at 230-378 folds into the Exonuclease domain; the sequence is LFGLDCEMCL…EDARTTLELA (149 aa). 2 RRM domains span residues 503–577 and 598–677; these read STVY…RPVT and GTIY…RHLH.

The protein is RNA exonuclease 5 (REXO5) of Bos taurus (Bovine).